The following is a 2221-amino-acid chain: Voltage-dependent L-type calcium channel subunit alpha-1C (2221 aa).

The interval 1–20 (MVNENTRMYIPEENHQGSNY) is disordered. Residues 1–124 (MVNENTRMYI…RACISIVEWK (124 aa)) lie on the Cytoplasmic side of the membrane. The calmodulin-binding stretch occupies residues 47–68 (GAALSWQAAIDAARQAKLMGSA). The disordered stretch occupies residues 73 to 98 (ISTVSSTQRKRQQYGKPKKQGSTTAT). A compositionally biased stretch (basic residues) spans 80 to 91 (QRKRQQYGKPKK). Residues 111–408 (NPIRRACISI…LVLGVLSGEF (298 aa)) form an I repeat. A helical membrane pass occupies residues 125-143 (PFEIIILLTIFANCVALAI). The Extracellular segment spans residues 144–158 (YIPFPEDDSNATNSN). N-linked (GlcNAc...) asparagine glycosylation is present at Asn-153. A helical transmembrane segment spans residues 159–179 (LERVEYLFLIIFTVEAFLKVI). The Cytoplasmic segment spans residues 180-188 (AYGLLFHPN). A helical membrane pass occupies residues 189 to 209 (AYLRNGWNLLDFIIVVVGLFS). The Extracellular segment spans residues 210–232 (AILEQATKADGANALGGKGAGFD). The helical transmembrane segment at 233 to 251 (VKALRAFRVLRPLRLVSGV) threads the bilayer. The Cytoplasmic segment spans residues 252-268 (PSLQVVLNSIIKAMVPL). The chain crosses the membrane as a helical span at residues 269 to 290 (LHIALLVLFVIIIYAIIGLELF). The Extracellular segment spans residues 291–350 (MGKMHKTCYNQEGIADVPAEDDPSPCALETGHGRQCQNGTVCKPGWDGPKHGITNFDNFA). Intrachain disulfides connect Cys-298-Cys-326 and Cys-316-Cys-332. Asn-328 carries N-linked (GlcNAc...) asparagine glycosylation. The segment at residues 351 to 372 (FAMLTVFQCITMEGWTDVLYWV) is an intramembrane region (pore-forming). Residues 361–364 (TMEG) carry the Selectivity filter of repeat I motif. Glu-363 contacts Ca(2+). At 373 to 380 (NDAVGRDW) the chain is on the extracellular side. The chain crosses the membrane as a helical span at residues 381 to 401 (PWIYFVTLIIIGSFFVLNLVL). At 402–524 (GVLSGEFSKE…RKCRAAVKSN (123 aa)) the chain is on the cytoplasmic side. The tract at residues 428 to 445 (QQLEEDLKGYLDWITQAE) is AID/alpha-interaction domain; mediates interaction with the beta subunit. The interval 449–481 (PENEDEGMDEEKPRNMSMPTSETESVNTENVAG) is disordered. A compositionally biased stretch (polar residues) spans 465–478 (SMPTSETESVNTEN). Ser-469 is subject to Phosphoserine. A Phosphothreonine modification is found at Thr-476. Residues 510 to 756 (NRFCRRKCRA…VFLAIAVDNL (247 aa)) form an II repeat. A helical transmembrane segment spans residues 525–543 (VFYWLVIFLVFLNTLTIAS). At 544-554 (EHYNQPNWLTE) the chain is on the extracellular side. The helical transmembrane segment at 555 to 575 (VQDTANKALLALFTAEMLLKM) threads the bilayer. Residues 576–586 (YSLGLQAYFVS) are Cytoplasmic-facing. A helical transmembrane segment spans residues 587–606 (LFNRFDCFVVCGGILETILV). At 607 to 615 (ETKIMSPLG) the chain is on the extracellular side. Residues 616–634 (ISVLRCVRLLRIFKITRYW) form a helical membrane-spanning segment. Topologically, residues 635 to 653 (NSLSNLVASLLNSVRSIAS) are cytoplasmic. A helical membrane pass occupies residues 654 to 673 (LLLLLFLFIIIFSLLGMQLF). Residues 674-693 (GGKFNFDEMQTRRSTFDNFP) are Extracellular-facing. Residues 694–715 (QSLLTVFQILTGEDWNSVMYDG) constitute an intramembrane region (pore-forming). A Selectivity filter of repeat II motif is present at residues 704-707 (TGED). Glu-706 provides a ligand contact to Ca(2+). The Extracellular portion of the chain corresponds to 716 to 725 (IMAYGGPSFP). The helical transmembrane segment at 726–745 (GMLVCIYFIILFICGNYILL) threads the bilayer. Residues 746–900 (NVFLAIAVDN…LQCHRIVNDT (155 aa)) are Cytoplasmic-facing. Residues 764-861 (SAQKEEEEEK…EMPVGPRPRP (98 aa)) are disordered. Residues 783–792 (SPEKKQELVE) show a composition bias toward basic and acidic residues. Residues Ser-808 and Ser-815 each carry the phosphoserine modification. Residues 829–876 (NENEDKSPYPNPETTGEEDEEEPEMPVGPRPRPLSELHLKEKAVPMPE) form an interaction with STAC2 region. Residues 843-852 (TGEEDEEEPE) are compositionally biased toward acidic residues. The III repeat unit spans residues 887–1189 (NRFRLQCHRI…IFVGFVIVTF (303 aa)). Residues 901-919 (IFTNLILFFILLSSISLAA) form a helical membrane-spanning segment. Residues 920 to 931 (EDPVQHTSFRNH) are Extracellular-facing. Residues 932-952 (ILFYFDIVFTTIFTIEIALKI) traverse the membrane as a helical segment. The Cytoplasmic portion of the chain corresponds to 953 to 987 (LGNADYVFTSIFTLEIILKMTAYGAFLHKGSFCRN). A helical transmembrane segment spans residues 988 to 1006 (YFNILDLLVVSVSLISFGI). Residues 1007-1013 (QSSAINV) are Extracellular-facing. A helical transmembrane segment spans residues 1014-1032 (VKILRVLRVLRPLRAINRA). Over 1033 to 1051 (KGLKHVVQCVFVAIRTIGN) the chain is Cytoplasmic. A helical membrane pass occupies residues 1052 to 1071 (IVIVTTLLQFMFACIGVQLF). Residues 1072-1121 (KGKLYTCSDSSKQTEAECKGNYITYKDGEVDHPIIQPRSWENSKFDFDNV) lie on the Extracellular side of the membrane. A disulfide bond links Cys-1078 and Cys-1089. The dihydropyridine binding stretch occupies residues 1109 to 1198 (RSWENSKFDF…FQEQGEQEYK (90 aa)). The pore-forming intramembrane region spans 1122 to 1142 (LAAMMALFTVSTFEGWPELLY). The Selectivity filter of repeat III signature appears at 1133–1136 (TFEG). Glu-1135 provides a ligand contact to Ca(2+). At 1143–1159 (RSIDSHTEDKGPIYNYR) the chain is on the extracellular side. A helical transmembrane segment spans residues 1160-1181 (VEISIFFIIYIIIIAFFMMNIF). Residues 1182–1239 (VGFVIVTFQEQGEQEYKNCELDKNQRQCVEYALKARPLRRYIPKNQHQYKVWYVVNST) are Cytoplasmic-facing. An IV repeat occupies 1226–1527 (NQHQYKVWYV…LFVAVIMDNF (302 aa)). A helical membrane pass occupies residues 1240 to 1261 (YFEYLMFVLILLNTICLAMQHY). Over 1262-1269 (GQSCLFKI) the chain is Extracellular. The helical transmembrane segment at 1270–1291 (AMNILNMLFTGLFTVEMILKLI) threads the bilayer. Residues 1292 to 1301 (AFKPKGYFSD) are Cytoplasmic-facing. Residues 1302–1321 (PWNVFDFLIVIGSIIDVILS) form a helical membrane-spanning segment. Residues 1322–1372 (ETNHYFCDAWNTFDALIVVGSIVDIAITEVNPAEHTQCSPSMNAEENSRIS) lie on the Extracellular side of the membrane. Residues 1373 to 1391 (ITFFRLFRVMRLVKLLSRG) traverse the membrane as a helical segment. The Cytoplasmic segment spans residues 1392-1409 (EGIRTLLWTFIKSFQALP). A helical membrane pass occupies residues 1410–1430 (YVALLIVMLFFIYAVIGMQVF). Residues 1431–1452 (GKIALNDTTEINRNNNFQTFPQ) are Extracellular-facing. N-linked (GlcNAc...) asparagine glycosylation is present at Asn-1436. An intramembrane region (pore-forming) is located at residues 1453–1471 (AVLLLFRCATGEAWQDIML). The Selectivity filter of repeat IV signature appears at 1462–1465 (TGEA). The Extracellular portion of the chain corresponds to 1472–1499 (ACMPGKKCAPESEPSNSTEGETPCGSSF). Residues 1478–1546 (KCAPESEPSN…LGPHHLDEFK (69 aa)) are dihydropyridine binding. A disulfide bond links Cys-1479 and Cys-1495. The N-linked (GlcNAc...) asparagine glycan is linked to Asn-1487. Residues 1492 to 1534 (ETPCGSSFAVFYFISFYMLCAFLIINLFVAVIMDNFDYLTRDW) are phenylalkylamine binding. A helical membrane pass occupies residues 1500 to 1524 (AVFYFISFYMLCAFLIINLFVAVIM). The Cytoplasmic segment spans residues 1525-2221 (DNFDYLTRDW…QDSRVYVSSL (697 aa)). The segment at 1659–1686 (DEVTVGKFYATFLIQEYFRKFKKRKEQG) is important for interaction with STAC1, STAC2 and STAC3. The calmodulin-binding IQ region stretch occupies residues 1665 to 1685 (KFYATFLIQEYFRKFKKRKEQ). Residues 1699-1718 (LQAGLRTLHDIGPEIRRAIS) are important for localization in at the junctional membrane. A phosphoserine mark is found at Ser-1718 and Ser-1739. The disordered stretch occupies residues 1778-1847 (INKAGSSQGD…TVEGHGPPLS (70 aa)). Residues 1799–1811 (STFTPSSYSSTGS) show a composition bias toward polar residues. A compositionally biased stretch (low complexity) spans 1812–1822 (NANINNANNTA). Ser-1981 carries the phosphoserine; by PKA modification. Disordered stretches follow at residues 2029–2063 (ASFPRPFATPPATPGSRGWPPQPVPTLRLEGVESS) and 2186–2221 (AGQDRAGGEEDAGCVRARGRPSEEELQDSRVYVSSL).

It belongs to the calcium channel alpha-1 subunit (TC 1.A.1.11) family. CACNA1C subfamily. As to quaternary structure, component of a calcium channel complex consisting of a pore-forming alpha subunit (CACNA1C) and ancillary beta, gamma and delta subunits. The channel complex contains alpha, beta, gamma and delta subunits in a 1:1:1:1 ratio, i.e. it contains only one of each type of subunit. CACNA1C channel activity is modulated by ancillary subunits, such as CACNB1, CACNB2, CACNB3, CACNA2D1 and CACNA2D4. Interacts with the gamma subunits CACNG4, CACNG6, CACNG7 and CACNG8. Interacts with CACNB1. Interacts with CACNB2. Identified in a complex with CACNA2D4 and CACNB3. Interacts with CACNB3. Interacts with CACNA2D1. Interacts with CACNA2D4. Interacts with CALM1. Interacts (via the N-terminus and the C-terminal C and IQ motifs) with CABP1; this inhibits Ca(2+)-dependent channel inactivation. The binding via the C motif is calcium independent whereas the binding via IQ requires the presence of calcium and is mutually exclusive with calmodulin binding. The binding to the cytoplasmic N-terminal domain is calcium independent but is essential for the channel modulation. Interacts (via C-terminal CDB motif) with CABP5; in a calcium-dependent manner. Interacts with CIB1; the interaction increases upon cardiomyocytes hypertrophy. Interacts with STAC2 and STAC3; this inhibits channel inactivation. (Microbial infection) Interacts with influenzavirus H1 hemagglutinin. Post-translationally, phosphorylation by PKA at Ser-1981 activates the channel. Elevated levels of blood glucose lead to increased phosphorylation by PKA. In terms of tissue distribution, detected throughout the brain, including hippocampus, cerebellum and amygdala, throughout the heart and vascular system, including ductus arteriosus, in urinary bladder, and in retina and sclera in the eye. Expressed in brain, heart, jejunum, ovary, pancreatic beta-cells and vascular smooth muscle. Overall expression is reduced in atherosclerotic vascular smooth muscle.

It localises to the cell membrane. Its subcellular location is the sarcolemma. It is found in the perikaryon. The protein resides in the postsynaptic density membrane. The protein localises to the cell projection. It localises to the dendrite. Its subcellular location is the T-tubule. It carries out the reaction Ca(2+)(in) = Ca(2+)(out). Its activity is regulated as follows. Inhibited by dihydropyridines (DHP), such as isradipine. Inhibited by nifedipine. Channel activity is regulated by Ca(2+) and calmodulin. Binding of STAC1, STAC2 or STAC3 to a region that overlaps with the calmodulin binding site inhibits channel inactivation by Ca(2+) and calmodulin. Binding of calmodulin or CABP1 at the same regulatory sites results in opposite effects on the channel function. Shear stress and pressure increases calcium channel activity. Its function is as follows. Pore-forming, alpha-1C subunit of the voltage-gated calcium channel that gives rise to L-type calcium currents. Mediates influx of calcium ions into the cytoplasm, and thereby triggers calcium release from the sarcoplasm. Plays an important role in excitation-contraction coupling in the heart. Required for normal heart development and normal regulation of heart rhythm. Required for normal contraction of smooth muscle cells in blood vessels and in the intestine. Essential for normal blood pressure regulation via its role in the contraction of arterial smooth muscle cells. Long-lasting (L-type) calcium channels belong to the 'high-voltage activated' (HVA) group. Pore-forming, alpha-1C subunit of the voltage-gated calcium channel that gives rise to L-type calcium currents. In terms of biological role, (Microbial infection) Acts as a receptor for Influenzavirus. May play a critical role in allowing virus entry when sialylated and expressed on lung tissues. The chain is Voltage-dependent L-type calcium channel subunit alpha-1C (CACNA1C) from Homo sapiens (Human).